Consider the following 269-residue polypeptide: Protein MGF 110-1L (269 aa).

The N-terminal stretch at 1 to 26 (MLGLQIFTLLSIPTLLYTYELELLDL) is a signal peptide. An A repeat occupies 1–145 (MLGLQIFTLL…YVRKRSLQTV (145 aa)). Residues 27-116 (TRTPPEKELE…HEWHEAVIRK (90 aa)) lie on the Extracellular side of the membrane. N-linked (GlcNAc...) asparagine; by host glycosylation occurs at N75. The helical transmembrane segment at 117–137 (WQKLLTYGFYLVGCVLVANYV) threads the bilayer. Residues 138-144 (RKRSLQT) lie on the Cytoplasmic side of the membrane. The helical transmembrane segment at 145–165 (VMYLLVLLVIFFLLSQLMLYR) threads the bilayer. A B repeat occupies 147–269 (YLLVLLVIFF…DNLMKKQDIM (123 aa)). Over 166–269 (ELEDKKHKIG…DNLMKKQDIM (104 aa)) the chain is Extracellular.

It belongs to the asfivirus MGF 110 family.

It localises to the host membrane. In terms of biological role, plays a role in virus cell tropism, and may be required for efficient virus replication in macrophages. This chain is Protein MGF 110-1L, found in African swine fever virus (isolate Warthog/Namibia/Wart80/1980) (ASFV).